A 994-amino-acid polypeptide reads, in one-letter code: Sarcoplasmic/endoplasmic reticulum calcium ATPase 1 (994 aa).

The Cytoplasmic portion of the chain corresponds to 1-48; the sequence is MEQAHTKTTEECLAYFGVNENTGLSLDQVKKNFDKFGPNELPAEEGKS. Residues 49-69 form a helical membrane-spanning segment; sequence LWELVAEQFEDLLVRILLLAA. The Lumenal segment spans residues 70–89; the sequence is IISFVLAWFEEGEETVTAFV. A helical membrane pass occupies residues 90 to 110; sequence EPFVILLILIANAVVGVWQER. At 111 to 253 the chain is on the cytoplasmic side; it reads NAEDAIEALK…QEKTPLQQKL (143 aa). Residues 254–273 form a helical membrane-spanning segment; that stretch reads DEFGEQLSKVISLICVAVWL. Residues 274 to 295 are Lumenal-facing; sequence INIGHFNDPIHGGSWIKGAIYY. Residues 296 to 313 form a helical membrane-spanning segment; sequence FKIAVALAVAAIPEGLPA. Ca(2+) contacts are provided by V304, A305, I307, and E309. Residues 314 to 757 lie on the Cytoplasmic side of the membrane; that stretch reads VITTCLALGT…EEGRAIYNNM (444 aa). D351 serves as the catalytic 4-aspartylphosphate intermediate. Positions 351 and 353 each coordinate Mg(2+). T353, E442, R489, K515, R560, T625, G626, D627, R678, and K684 together coordinate ATP. D703 contributes to the Mg(2+) binding site. ATP is bound at residue N706. A helical membrane pass occupies residues 758 to 777; it reads KQFIRYLISSNVGEVVCIFL. Residues N768 and E771 each contribute to the Ca(2+) site. At 778–787 the chain is on the lumenal side; it reads TAALGLPEAL. Residues 788 to 808 form a helical membrane-spanning segment; that stretch reads IPVQLLWVNLVTDGLPATALG. The interaction with PLN stretch occupies residues 788–808; that stretch reads IPVQLLWVNLVTDGLPATALG. Positions 796, 799, and 800 each coordinate Ca(2+). The Cytoplasmic portion of the chain corresponds to 809–828; it reads FNPPDLDIMDRPPRSPKEPL. The helical transmembrane segment at 829–851 threads the bilayer; sequence ISGWLFFRYMAIGGYVGAATVGA. Residues 852 to 897 lie on the Lumenal side of the membrane; it reads AAWWFMYADDGPNVTFYQLSHFMQCTEDNPDFEGHECEIFESPVPM. Residues C876 and C888 are joined by a disulfide bond. Residues 898–917 traverse the membrane as a helical segment; that stretch reads TMALSVLVTIEMCNALNSLS. E908 contributes to the Ca(2+) binding site. The Cytoplasmic portion of the chain corresponds to 918–930; sequence ENQSLIRMPPWSN. A helical transmembrane segment spans residues 931 to 949; the sequence is FWLLGSICLSMSLHFLILY. Residues 932–943 form an interaction with PLN region; it reads WLLGSICLSMSL. Over 950-964 the chain is Lumenal; that stretch reads VEPLPMIFKLTPLNV. The chain crosses the membrane as a helical span at residues 965–985; it reads EQWFIVLKMSFPVILLDELLK. Over 986–994 the chain is Cytoplasmic; sequence FVARNYLEG.

The protein belongs to the cation transport ATPase (P-type) (TC 3.A.3) family. Type IIA subfamily. As to quaternary structure, interacts with sarcolipin (SLN). Interacts with phospholamban (PLN). Interacts with myoregulin (MRLN). Interacts with DWORF. Interacts with VMP1. The cofactor is Mg(2+).

Its subcellular location is the endoplasmic reticulum membrane. The protein localises to the sarcoplasmic reticulum membrane. It carries out the reaction Ca(2+)(in) + ATP + H2O = Ca(2+)(out) + ADP + phosphate + H(+). With respect to regulation, inhibited by sarcolipin (SLN) and myoregulin (MRLN). Also shown to be inhibited by phospholamban (PLN) in vitro. Enhanced by DWORF; DWORF increases activity by displacing sarcolipin (SLN), phospholamban (PLN) and myoregulin (MRLN). In terms of biological role, key regulator of striated muscle performance by acting as the major Ca(2+) ATPase responsible for the reuptake of cytosolic Ca(2+) into the sarcoplasmic reticulum. Catalyzes the hydrolysis of ATP coupled with the translocation of calcium from the cytosol to the sarcoplasmic reticulum lumen. Contributes to calcium sequestration involved in muscular excitation/contraction. This is Sarcoplasmic/endoplasmic reticulum calcium ATPase 1 (ATP2A1) from Pelophylax lessonae (Pool frog).